Here is a 350-residue protein sequence, read N- to C-terminus: Probable flap endonuclease 1 homolog (350 aa).

An N-domain region spans residues 1–95 (MGITKLAHLI…AVLEKRAQST (95 aa)). Position 34 (D34) interacts with Mg(2+). R61 contacts DNA. Mg(2+) contacts are provided by D77, E130, E132, D151, and D153. Residues 110-223 (NQECLRLLHL…SRALKLIKEH (114 aa)) are I-domain. E130 provides a ligand contact to DNA. DNA-binding residues include G201 and D203. D203 provides a ligand contact to Mg(2+). The tract at residues 317–325 (RQSRLEDFF) is interaction with PCNA.

It belongs to the XPG/RAD2 endonuclease family. FEN1 subfamily. In terms of assembly, interacts with PCNA. Three molecules of fen1 bind to one PCNA trimer with each molecule binding to one PCNA monomer. PCNA stimulates the nuclease activity without altering cleavage specificity. It depends on Mg(2+) as a cofactor. Phosphorylated. Phosphorylation upon DNA damage induces relocalization to the nuclear plasma.

Its subcellular location is the nucleus. It localises to the nucleolus. The protein localises to the nucleoplasm. The protein resides in the mitochondrion. Functionally, structure-specific nuclease with 5'-flap endonuclease and 5'-3' exonuclease activities involved in DNA replication and repair. During DNA replication, cleaves the 5'-overhanging flap structure that is generated by displacement synthesis when DNA polymerase encounters the 5'-end of a downstream Okazaki fragment. It enters the flap from the 5'-end and then tracks to cleave the flap base, leaving a nick for ligation. Also involved in the long patch base excision repair (LP-BER) pathway, by cleaving within the apurinic/apyrimidinic (AP) site-terminated flap. Acts as a genome stabilization factor that prevents flaps from equilibrating into structures that lead to duplications and deletions. Also possesses 5'-3' exonuclease activity on nicked or gapped double-stranded DNA, and exhibits RNase H activity. Also involved in replication and repair of rDNA and in repairing mitochondrial DNA. The protein is Probable flap endonuclease 1 homolog of Danio rerio (Zebrafish).